The sequence spans 245 residues: MIVIPAIDLKEGKCVRLEQGLMDKDTVFCDNPAEQAREWERQGGELLHIVDLDGAFAGKPANKSAIEAIVKAVRIPTQLGGGIRDIETIKAYLDLGLSRVILGTAAQRNPKLVEEACKLFPGRIVVGIDAKNGLVAVQGWAEVTDVYAVDLARLFEGYGVTAVIYTDISRDGMMQGPNIDATRALAEAISIPVIASGGVSSLKDIENLMAVESAGVTGVITGKAIYTGAIKLAEAVALTKKCRQG.

Asp8 functions as the Proton acceptor in the catalytic mechanism. The Proton donor role is filled by Asp129.

Belongs to the HisA/HisF family.

The protein resides in the cytoplasm. The enzyme catalyses 1-(5-phospho-beta-D-ribosyl)-5-[(5-phospho-beta-D-ribosylamino)methylideneamino]imidazole-4-carboxamide = 5-[(5-phospho-1-deoxy-D-ribulos-1-ylimino)methylamino]-1-(5-phospho-beta-D-ribosyl)imidazole-4-carboxamide. It functions in the pathway amino-acid biosynthesis; L-histidine biosynthesis; L-histidine from 5-phospho-alpha-D-ribose 1-diphosphate: step 4/9. The polypeptide is 1-(5-phosphoribosyl)-5-[(5-phosphoribosylamino)methylideneamino] imidazole-4-carboxamide isomerase (Geotalea uraniireducens (strain Rf4) (Geobacter uraniireducens)).